The following is a 218-amino-acid chain: Glutathione S-transferase (218 aa).

One can recognise a GST N-terminal domain in the interval 3–88 (SKPVLGYWDI…YIGRKYKLTG (86 aa)). Glutathione is bound by residues 9–10 (YW), 43–46 (RSAW), K50, 59–60 (NL), and 72–73 (QT). The GST C-terminal domain occupies 90–206 (NEPEELRVSL…YIKAQQPKLF (117 aa)). Residue Y116 participates in substrate binding.

This sequence belongs to the GST superfamily. Mu family.

It carries out the reaction RX + glutathione = an S-substituted glutathione + a halide anion + H(+). In terms of biological role, conjugation of reduced glutathione to a wide number of exogenous and endogenous hydrophobic electrophiles. This chain is Glutathione S-transferase, found in Tyrophagus putrescentiae (Mold mite).